Consider the following 900-residue polypeptide: Bifunctional uridylyltransferase/uridylyl-removing enzyme (900 aa).

A uridylyltransferase region spans residues 1-342; that stretch reads MPQVDPELFD…WEGESGPIVP (342 aa). The segment at 343–705 is uridylyl-removing; that stretch reads LNSRFQVRDG…TTQREFEGGT (363 aa). The region spanning 461 to 583 is the HD domain; the sequence is VDAHTLNVIK…VGDETHLDYL (123 aa). ACT domains lie at 706–789 and 816–896; these read QIFI…IIQR and ILEI…PSPS.

It belongs to the GlnD family. Mg(2+) serves as cofactor.

The catalysed reaction is [protein-PII]-L-tyrosine + UTP = [protein-PII]-uridylyl-L-tyrosine + diphosphate. It catalyses the reaction [protein-PII]-uridylyl-L-tyrosine + H2O = [protein-PII]-L-tyrosine + UMP + H(+). With respect to regulation, uridylyltransferase (UTase) activity is inhibited by glutamine, while glutamine activates uridylyl-removing (UR) activity. Modifies, by uridylylation and deuridylylation, the PII regulatory proteins (GlnB and homologs), in response to the nitrogen status of the cell that GlnD senses through the glutamine level. Under low glutamine levels, catalyzes the conversion of the PII proteins and UTP to PII-UMP and PPi, while under higher glutamine levels, GlnD hydrolyzes PII-UMP to PII and UMP (deuridylylation). Thus, controls uridylylation state and activity of the PII proteins, and plays an important role in the regulation of nitrogen fixation and metabolism. The sequence is that of Bifunctional uridylyltransferase/uridylyl-removing enzyme from Stutzerimonas stutzeri (strain A1501) (Pseudomonas stutzeri).